The primary structure comprises 1013 residues: Lysosomal alpha-mannosidase (1013 aa).

A signal peptide spans 1-49 (MGTGPLTSGVRAGGGNTGWLWMSSCNLGSPVLPISFLFWLLLAAPGARA). Intrachain disulfides connect Cys55–Cys358 and Cys268–Cys273. Zn(2+) is bound by residues His72, Asp74, and Asp196. Asp196 serves as the catalytic Nucleophile. N-linked (GlcNAc...) asparagine glycosylation is found at Asn310, Asn345, and Asn367. Cys412 and Cys472 form a disulfide bridge. Residue His446 participates in Zn(2+) binding. N-linked (GlcNAc...) asparagine glycosylation is found at Asn489, Asn497, Asn544, Asn633, Asn646, Asn693, Asn767, and Asn931. Cys493 and Cys501 are disulfide-bonded.

Belongs to the glycosyl hydrolase 38 family. The cofactor is Zn(2+).

It is found in the lysosome. The enzyme catalyses Hydrolysis of terminal, non-reducing alpha-D-mannose residues in alpha-D-mannosides.. Functionally, necessary for the catabolism of N-linked carbohydrates released during glycoprotein turnover. The chain is Lysosomal alpha-mannosidase (Man2b1) from Mus musculus (Mouse).